Consider the following 412-residue polypeptide: 1-deoxy-D-xylulose 5-phosphate reductoisomerase (412 aa).

Positions 10, 11, 12, 13, 36, 37, 38, and 130 each coordinate NADPH. Residue lysine 131 participates in 1-deoxy-D-xylulose 5-phosphate binding. Residue glutamate 132 coordinates NADPH. Residue aspartate 156 coordinates Mn(2+). 1-deoxy-D-xylulose 5-phosphate contacts are provided by serine 157, glutamate 158, serine 194, and histidine 217. Glutamate 158 serves as a coordination point for Mn(2+). Glycine 223 provides a ligand contact to NADPH. The 1-deoxy-D-xylulose 5-phosphate site is built by serine 230, asparagine 235, lysine 236, and glutamate 239. Mn(2+) is bound at residue glutamate 239.

This sequence belongs to the DXR family. Mg(2+) is required as a cofactor. Requires Mn(2+) as cofactor.

The enzyme catalyses 2-C-methyl-D-erythritol 4-phosphate + NADP(+) = 1-deoxy-D-xylulose 5-phosphate + NADPH + H(+). The protein operates within isoprenoid biosynthesis; isopentenyl diphosphate biosynthesis via DXP pathway; isopentenyl diphosphate from 1-deoxy-D-xylulose 5-phosphate: step 1/6. Its function is as follows. Catalyzes the NADPH-dependent rearrangement and reduction of 1-deoxy-D-xylulose-5-phosphate (DXP) to 2-C-methyl-D-erythritol 4-phosphate (MEP). This chain is 1-deoxy-D-xylulose 5-phosphate reductoisomerase, found in Prochlorococcus marinus (strain NATL2A).